The following is a 721-amino-acid chain: Polyribonucleotide nucleotidyltransferase (721 aa).

Mg(2+) contacts are provided by Asp-495 and Asp-501. Positions 562-621 (PRLLSFRIDPELIGTVIGPGGRTIKGITERTNTKIDIEDGGIVTIASHDGAAAEEAQKII) constitute a KH domain. Residues 631-699 (GEVFSGSITR…NRGRINLTLR (69 aa)) form the S1 motif domain.

Belongs to the polyribonucleotide nucleotidyltransferase family. Requires Mg(2+) as cofactor.

The protein localises to the cytoplasm. It carries out the reaction RNA(n+1) + phosphate = RNA(n) + a ribonucleoside 5'-diphosphate. Involved in mRNA degradation. Catalyzes the phosphorolysis of single-stranded polyribonucleotides processively in the 3'- to 5'-direction. This Synechococcus sp. (strain CC9605) protein is Polyribonucleotide nucleotidyltransferase.